Here is a 211-residue protein sequence, read N- to C-terminus: Dual specificity protein phosphatase 26 (211 aa).

Residues 60 to 207 form the Tyrosine-protein phosphatase domain; the sequence is NHADEVWPGL…LLALDRRLRQ (148 aa). Cys-152 functions as the Phosphocysteine intermediate in the catalytic mechanism.

This sequence belongs to the protein-tyrosine phosphatase family. Non-receptor class dual specificity subfamily. Interacts with HSF4.

It is found in the cytoplasm. The protein resides in the nucleus. It localises to the golgi apparatus. The enzyme catalyses O-phospho-L-tyrosyl-[protein] + H2O = L-tyrosyl-[protein] + phosphate. The catalysed reaction is O-phospho-L-seryl-[protein] + H2O = L-seryl-[protein] + phosphate. It catalyses the reaction O-phospho-L-threonyl-[protein] + H2O = L-threonyl-[protein] + phosphate. Functionally, inactivates MAPK1 and MAPK3 which leads to dephosphorylation of heat shock factor protein 4 and a reduction in its DNA-binding activity. The polypeptide is Dual specificity protein phosphatase 26 (DUSP26) (Pongo abelii (Sumatran orangutan)).